The sequence spans 640 residues: Scarecrow-like protein 27 (640 aa).

2 stretches are compositionally biased toward low complexity: residues 68 to 79 and 86 to 98; these read SYSSTTTTLSSS and TVTNTTVTAGDDN. The interval 68 to 98 is disordered; it reads SYSSTTTTLSSSHGGGGTTVTNTTVTAGDDN. The GRAS domain occupies 259–639; that stretch reads GMAGDDQSVI…KELVTVSAWK (381 aa). The leucine repeat I (LRI) stretch occupies residues 266-331; the sequence is SVIIEQLFNA…AEALLSLIHN (66 aa). The interval 350 to 422 is VHIID; the sequence is YRSFSETSPF…NRASSLKLTV (73 aa). A VHIID motif is present at residues 383-387; sequence IHIID. A leucine repeat II (LRII) region spans residues 438 to 470; it reads FTEENLKTFAGEVKIPFEIELLSVELLLNPAYW. Residues 480 to 565 are PFYRE; it reads EAIAVNLPVN…RFWVQPSIEK (86 aa). The segment at 568 to 639 is SAW; the sequence is MKRHRWIERS…KELVTVSAWK (72 aa).

Belongs to the GRAS family. As to expression, expressed in seedlings, roots, cotyledons, leaves and flowers.

It is found in the nucleus. In terms of biological role, probable transcription factor involved in plant development. The chain is Scarecrow-like protein 27 (SCL27) from Arabidopsis thaliana (Mouse-ear cress).